The following is a 132-amino-acid chain: ATP synthase epsilon chain (132 aa).

The protein belongs to the ATPase epsilon chain family. In terms of assembly, F-type ATPases have 2 components, CF(1) - the catalytic core - and CF(0) - the membrane proton channel. CF(1) has five subunits: alpha(3), beta(3), gamma(1), delta(1), epsilon(1). CF(0) has three main subunits: a, b and c.

The protein resides in the cell inner membrane. Its function is as follows. Produces ATP from ADP in the presence of a proton gradient across the membrane. This is ATP synthase epsilon chain from Gloeobacter violaceus (strain ATCC 29082 / PCC 7421).